The chain runs to 50 residues: Insulin (50 aa).

3 disulfide bridges follow: cysteine 7–cysteine 36, cysteine 19–cysteine 49, and cysteine 35–cysteine 40.

Belongs to the insulin family. Heterodimer of a B chain and an A chain linked by two disulfide bonds.

It localises to the secreted. Its function is as follows. Insulin decreases blood glucose concentration. It increases cell permeability to monosaccharides, amino acids and fatty acids. It accelerates glycolysis, the pentose phosphate cycle, and glycogen synthesis in liver. This Myoxocephalus scorpius (Shorthorn sculpin) protein is Insulin (ins).